Here is a 241-residue protein sequence, read N- to C-terminus: MNSSHESLADVLVKICGIKRPEDAILADKLGADLLGLIHVERSPRHLTGRELEDILSLIPPEKAVIVLEPSDPVEVAEVIERTGVERVQLHSISCEDARGIKRVLTENGFNPGITVAVPPEPGSLDVLDHIPCSCVMLDSSSGGRTGGTGRMIPPELALGMLRLIRSHESAPEVALAGGLGPSTVRLNPEYLLEFDCLDFNSGIEAAPGIKDHAMMFELMEYMGRTGGLQKPSRLQRGELS.

It belongs to the TrpF family.

It carries out the reaction N-(5-phospho-beta-D-ribosyl)anthranilate = 1-(2-carboxyphenylamino)-1-deoxy-D-ribulose 5-phosphate. It functions in the pathway amino-acid biosynthesis; L-tryptophan biosynthesis; L-tryptophan from chorismate: step 3/5. The protein is N-(5'-phosphoribosyl)anthranilate isomerase (trpF) of Methanothermobacter thermautotrophicus (strain ATCC 29096 / DSM 1053 / JCM 10044 / NBRC 100330 / Delta H) (Methanobacterium thermoautotrophicum).